Here is a 654-residue protein sequence, read N- to C-terminus: Kelch-like protein 13 (654 aa).

One can recognise a BTB domain in the interval 91-160; the sequence is CDVTLMPGDT…IYTAKLSLNM (70 aa). Positions 195–296 constitute a BACK domain; it reads CVEVGRIANT…TPQELINYVQ (102 aa). Kelch repeat units follow at residues 340–388, 389–440, 441–487, 489–534, 536–586, and 587–635; these read RLVT…VIGN, FLYV…ALKG, FLYA…VYGG, MYIS…TVGD, LYVI…VFEN, and KIYV…TLTV.

Component of the BCR(KLHL9-KLHL13) E3 ubiquitin ligase complex, at least composed of CUL3, KLHL9, KLHL13 and RBX1. Interacts with AURKB.

The protein operates within protein modification; protein ubiquitination. Substrate-specific adapter of a BCR (BTB-CUL3-RBX1) E3 ubiquitin-protein ligase complex required for mitotic progression and cytokinesis. The BCR(KLHL9-KLHL13) E3 ubiquitin ligase complex mediates the ubiquitination of AURKB and controls the dynamic behavior of AURKB on mitotic chromosomes and thereby coordinates faithful mitotic progression and completion of cytokinesis. This is Kelch-like protein 13 (Klhl13) from Mus musculus (Mouse).